Here is a 55-residue protein sequence, read N- to C-terminus: MAKPTTIKIRLNSTAGTGYFYVTKKNARTMTEKLVLKKYDPVARKHVDFKEAKIK.

This sequence belongs to the bacterial ribosomal protein bL33 family.

This chain is Large ribosomal subunit protein bL33, found in Maricaulis maris (strain MCS10) (Caulobacter maris).